The primary structure comprises 1081 residues: FHF complex subunit HOOK-interacting protein 1A (1081 aa).

Disordered regions lie at residues 474 to 496 (SEEQ…PPPA), 544 to 623 (PETF…DPPK), 658 to 770 (EKDT…ENEP), and 863 to 883 (EAGS…RHPV). The segment covering 486 to 496 (PSSPSPPPPPA) has biased composition (pro residues). Over residues 553–564 (EESRENSGHPEA) the composition is skewed to basic and acidic residues. The segment covering 567 to 576 (PQQSVRTSGQ) has biased composition (polar residues). The span at 680-707 (EPLEDTSEQQEDTSEQLEDTSELQEDTA) shows a compositional bias: acidic residues. 2 stretches are compositionally biased toward polar residues: residues 727-738 (EAQSLPTSNGPL) and 746-762 (ESQP…NTFS).

The protein belongs to the FHIP family. As to quaternary structure, may be a component of the FTS/Hook/FHIP complex (FHF complex), composed of AKTIP/FTS, FHIP1B, and one or more members of the Hook family of proteins HOOK1, HOOK2, and HOOK3. May interact directly with AKTIP/FTS.

Its function is as follows. Probable component of the FTS/Hook/FHIP complex (FHF complex). FHF complex promotes the distribution of AP-4 complex to the perinuclear area of the cell. This chain is FHF complex subunit HOOK-interacting protein 1A, found in Mus musculus (Mouse).